Here is an 89-residue protein sequence, read N- to C-terminus: Small ribosomal subunit protein uS15 (89 aa).

This sequence belongs to the universal ribosomal protein uS15 family. As to quaternary structure, part of the 30S ribosomal subunit. Forms a bridge to the 50S subunit in the 70S ribosome, contacting the 23S rRNA.

Its function is as follows. One of the primary rRNA binding proteins, it binds directly to 16S rRNA where it helps nucleate assembly of the platform of the 30S subunit by binding and bridging several RNA helices of the 16S rRNA. Functionally, forms an intersubunit bridge (bridge B4) with the 23S rRNA of the 50S subunit in the ribosome. This is Small ribosomal subunit protein uS15 from Shewanella sediminis (strain HAW-EB3).